An 84-amino-acid polypeptide reads, in one-letter code: UPF0297 protein NT01CX_2279 (84 aa).

This sequence belongs to the UPF0297 family.

This is UPF0297 protein NT01CX_2279 from Clostridium novyi (strain NT).